We begin with the raw amino-acid sequence, 285 residues long: Pantothenate synthetase (285 aa).

Position 30-37 (30-37 (MGYLHEGH)) interacts with ATP. His37 acts as the Proton donor in catalysis. Gln61 lines the (R)-pantoate pocket. Residue Gln61 participates in beta-alanine binding. 148-151 (GKKD) serves as a coordination point for ATP. Position 154 (Gln154) interacts with (R)-pantoate. Residues Ile177 and 185–188 (LSSR) each bind ATP.

This sequence belongs to the pantothenate synthetase family. Homodimer.

Its subcellular location is the cytoplasm. It carries out the reaction (R)-pantoate + beta-alanine + ATP = (R)-pantothenate + AMP + diphosphate + H(+). The protein operates within cofactor biosynthesis; (R)-pantothenate biosynthesis; (R)-pantothenate from (R)-pantoate and beta-alanine: step 1/1. Catalyzes the condensation of pantoate with beta-alanine in an ATP-dependent reaction via a pantoyl-adenylate intermediate. The sequence is that of Pantothenate synthetase from Leptospira borgpetersenii serovar Hardjo-bovis (strain JB197).